Consider the following 484-residue polypeptide: uncharacterized protein (484 aa).

12 helical membrane passes run 19–39 (LSFG…MIFV), 78–98 (VNWG…WLIV), 110–130 (LFFM…GFII), 134–154 (IFAI…SNYL), 165–185 (FSPF…AGII), 199–219 (IVFL…IILG), 249–269 (TWYW…PFTF), 289–309 (ISVF…TIGL), 321–341 (ISTI…VFVL), 360–380 (LFLF…GVML), 398–418 (FGLI…ITSL), and 440–460 (LGAY…LALL).

It localises to the cell membrane. This is an uncharacterized protein from Mesomycoplasma hyopneumoniae (strain J / ATCC 25934 / NCTC 10110) (Mycoplasma hyopneumoniae).